The following is a 1113-amino-acid chain: Poly(A) RNA polymerase gld-2 (1113 aa).

Disordered stretches follow at residues 1–113, 134–175, 205–266, and 445–513; these read MVMA…PKYH, RPIF…PTQP, LYRS…GQDP, and LDDE…DEST. Residues 22-52 are compositionally biased toward low complexity; sequence SPSVDSVSRVQQQSGGFAFYNQQSNHQYQQS. Over residues 60 to 106 the composition is skewed to polar residues; the sequence is SRDGNTGYYNNHSGNKRQTYNNQRGGRSYNHRGNSNYQQNGEYSGNQ. Over residues 149-172 the composition is skewed to low complexity; the sequence is RRSSPPSPSALSSSTANSTSNRAP. Positions 223 to 233 are enriched in pro residues; it reads YKQPPPQPPST. Residues 451-485 are compositionally biased toward basic and acidic residues; it reads GADHDKTIDENRRRIHKSQEPRIGTEEKALNELPR. The segment covering 492 to 507 has biased composition (low complexity); the sequence is SSCSSISSVSESSSPS. Mg(2+)-binding residues include D606 and D608. A PAP-associated domain is found at 780 to 816; that stretch reads TLGELLIGFLDYYANEFNYDRDAISIRQGRRVERAAL. Disordered stretches follow at residues 817–854 and 966–1113; these read AVRPKIHSNSEGDKETPPPSSSASTSSIHNGGTPGIPM and GPGH…NVSQ. Residues 972–994 are compositionally biased toward polar residues; it reads YQQQSNQNLSRPQRPGSNQGYQM. Composition is skewed to low complexity over residues 995–1035 and 1044–1061; these read NNNR…SRSN and QQNSQKGSSGVSVSKENV. Basic and acidic residues predominate over residues 1069-1084; that stretch reads VDKKQQNSNRKDDGNR.

Belongs to the DNA polymerase type-B-like family. GLD2 subfamily. Interacts with gld-3. Mg(2+) is required as a cofactor. It depends on Mn(2+) as a cofactor. Germline-specific.

It is found in the cytoplasm. It catalyses the reaction RNA(n) + ATP = RNA(n)-3'-adenine ribonucleotide + diphosphate. Cytoplasmic poly(A) RNA polymerase that adds successive AMP monomers to the 3'-end of specific RNAs, forming a poly(A) tail. Acts as a regulator of mitosis/meiosis required for progression through meiotic prophase during oogenesis and spermatogenesis and for promotion of the entry into meiosis from the mitotic cell cycle. May act by regulating and activating gld-1 mRNA activity in germline. Required for polyadenylation of neg-1 mRNA during embryogenesis. The polypeptide is Poly(A) RNA polymerase gld-2 (gld-2) (Caenorhabditis elegans).